A 210-amino-acid polypeptide reads, in one-letter code: Probable GTP-binding protein EngB (210 aa).

The EngB-type G domain maps to 27–201 (MGIEVAFAGR…HQKLDIWFSQ (175 aa)). GTP-binding positions include 35–42 (GRSNAGKS), 62–66 (GRTQL), 80–83 (DLPG), 147–150 (TKAD), and 180–182 (FSV). 2 residues coordinate Mg(2+): Ser42 and Thr64.

This sequence belongs to the TRAFAC class TrmE-Era-EngA-EngB-Septin-like GTPase superfamily. EngB GTPase family. Requires Mg(2+) as cofactor.

Its function is as follows. Necessary for normal cell division and for the maintenance of normal septation. The sequence is that of Probable GTP-binding protein EngB from Photorhabdus laumondii subsp. laumondii (strain DSM 15139 / CIP 105565 / TT01) (Photorhabdus luminescens subsp. laumondii).